Reading from the N-terminus, the 244-residue chain is Nodulation protein G (244 aa).

11–35 lines the NAD(+) pocket; sequence VTGASGAIGGAIARVLHAQGAIVGL. S139 contributes to the substrate binding site. The active-site Proton acceptor is Y152.

This sequence belongs to the short-chain dehydrogenases/reductases (SDR) family.

In terms of biological role, proposed to modify Nod factor fatty acyl chain. The chain is Nodulation protein G (nodG) from Rhizobium meliloti (Ensifer meliloti).